The primary structure comprises 458 residues: ATP synthase subunit beta 2 (458 aa).

Residue 148-155 (GGAGVGKT) coordinates ATP.

It belongs to the ATPase alpha/beta chains family. F-type ATPases have 2 components, CF(1) - the catalytic core - and CF(0) - the membrane proton channel. CF(1) has five subunits: alpha(3), beta(3), gamma(1), delta(1), epsilon(1). CF(0) has three main subunits: a(1), b(2) and c(9-12). The alpha and beta chains form an alternating ring which encloses part of the gamma chain. CF(1) is attached to CF(0) by a central stalk formed by the gamma and epsilon chains, while a peripheral stalk is formed by the delta and b chains.

Its subcellular location is the cell inner membrane. It carries out the reaction ATP + H2O + 4 H(+)(in) = ADP + phosphate + 5 H(+)(out). Functionally, produces ATP from ADP in the presence of a proton gradient across the membrane. The catalytic sites are hosted primarily by the beta subunits. The sequence is that of ATP synthase subunit beta 2 from Marinomonas sp. (strain MWYL1).